The sequence spans 172 residues: Translation initiation factor IF-3 (172 aa).

This sequence belongs to the IF-3 family. Monomer.

It is found in the cytoplasm. Its function is as follows. IF-3 binds to the 30S ribosomal subunit and shifts the equilibrium between 70S ribosomes and their 50S and 30S subunits in favor of the free subunits, thus enhancing the availability of 30S subunits on which protein synthesis initiation begins. This chain is Translation initiation factor IF-3, found in Geobacter sulfurreducens (strain ATCC 51573 / DSM 12127 / PCA).